We begin with the raw amino-acid sequence, 300 residues long: Cation-efflux pump FieF (300 aa).

The chain crosses the membrane as a helical span at residues 24–44 (LLIKILAWWYTGSVSILAALV). Zn(2+)-binding residues include Asp45 and Asp49. The next 2 membrane-spanning stretches (helical) occupy residues 82–102 (AALAQSMFISGSALFLFLTSI) and 114–134 (PGVGIGVTVIALICTIILVTF). Residues His153 and Asp157 each contribute to the Zn(2+) site. Transmembrane regions (helical) follow at residues 156–176 (SDVMMNGAILIALGLSWYGWH) and 178–198 (ADALFALGIGIYILYSALRMG).

It belongs to the cation diffusion facilitator (CDF) transporter (TC 2.A.4) family. FieF subfamily. As to quaternary structure, homodimer.

The protein resides in the cell inner membrane. It carries out the reaction Zn(2+)(in) + H(+)(out) = Zn(2+)(out) + H(+)(in). The catalysed reaction is Cd(2+)(in) + H(+)(out) = Cd(2+)(out) + H(+)(in). It catalyses the reaction Fe(2+)(in) + H(+)(out) = Fe(2+)(out) + H(+)(in). Its function is as follows. Divalent metal cation transporter which exports Zn(2+), Cd(2+) and possibly Fe(2+). May be involved in zinc and iron detoxification by efflux. This is Cation-efflux pump FieF from Salmonella agona (strain SL483).